The primary structure comprises 344 residues: Transmembrane protein 268 (344 aa).

Positions 1 to 31 (MACEPQMDPGGAAGPLPTSSPGWSPLPGGSP) are disordered. Low complexity predominate over residues 14–27 (GPLPTSSPGWSPLP). 2 helical membrane-spanning segments follow: residues 106 to 126 (AFAVVFYVVVWANIYSTSQMF) and 133 to 153 (AGVLLVTLAATSLTLTLVVIF). Residues 244 to 266 (TANEGPENLLEETPLLPDRPGST) form a disordered region. Positions 247-259 (EGPENLLEETPLL) are enriched in low complexity.

Interacts with ITGAM; this interaction inhibits ITGAM degradation via the endosome-lysosome pathway. Interacts with ITGB4; this interaction prevents ITGB4 degradation.

The protein resides in the cell membrane. Functionally, stabilizes cell surface expression of ITGAM and participates in the adhesion and migration of phagocytes during bacterial clearance. This Bos taurus (Bovine) protein is Transmembrane protein 268 (TMEM268).